Consider the following 364-residue polypeptide: S-adenosylmethionine:tRNA ribosyltransferase-isomerase (364 aa).

Belongs to the QueA family. As to quaternary structure, monomer.

The protein localises to the cytoplasm. The catalysed reaction is 7-aminomethyl-7-carbaguanosine(34) in tRNA + S-adenosyl-L-methionine = epoxyqueuosine(34) in tRNA + adenine + L-methionine + 2 H(+). Its pathway is tRNA modification; tRNA-queuosine biosynthesis. In terms of biological role, transfers and isomerizes the ribose moiety from AdoMet to the 7-aminomethyl group of 7-deazaguanine (preQ1-tRNA) to give epoxyqueuosine (oQ-tRNA). The protein is S-adenosylmethionine:tRNA ribosyltransferase-isomerase of Lachnoclostridium phytofermentans (strain ATCC 700394 / DSM 18823 / ISDg) (Clostridium phytofermentans).